Consider the following 80-residue polypeptide: Exodeoxyribonuclease 7 small subunit (80 aa).

This sequence belongs to the XseB family. Heterooligomer composed of large and small subunits.

Its subcellular location is the cytoplasm. It catalyses the reaction Exonucleolytic cleavage in either 5'- to 3'- or 3'- to 5'-direction to yield nucleoside 5'-phosphates.. Functionally, bidirectionally degrades single-stranded DNA into large acid-insoluble oligonucleotides, which are then degraded further into small acid-soluble oligonucleotides. This chain is Exodeoxyribonuclease 7 small subunit, found in Edwardsiella ictaluri (strain 93-146).